Consider the following 277-residue polypeptide: MELIEKHASFGGWQNVYRHYSQSLKCEMNVGVYLPPKAANEKLPVLYWLSGLTCNEQNFITKSGMQRYAAEHNIIVVAPDTSPRGSHVADADRYDLGQGAGFYLNATQAPWNEHYKMYDYIRNELPDLVMQHFPATTRKSISGHSMGGLGALVLALRNPDEYVSVSAFSPIVSPSQVPWGQQAFAAYLGENKDAWLDYDPVSLISQGQRVAEIMVDQGLSDDFYAEQLRTPNLEKICQEMNIKTLIRYHEGYDHSYYFVSSFIGEHIAYHANKLNMR.

Active-site charge relay system residues include S145, D221, and H254.

This sequence belongs to the esterase D family.

It catalyses the reaction S-formylglutathione + H2O = formate + glutathione + H(+). In terms of biological role, serine hydrolase involved in the detoxification of formaldehyde. Hydrolyzes S-formylglutathione to glutathione and formate. This chain is S-formylglutathione hydrolase FrmB (frmB), found in Escherichia coli O139:H28 (strain E24377A / ETEC).